The chain runs to 155 residues: Pathogenesis-related protein A (155 aa).

This sequence belongs to the BetVI family.

The protein is Pathogenesis-related protein A (PCPR1-1) of Petroselinum crispum (Parsley).